Reading from the N-terminus, the 695-residue chain is Nucleoprotein (695 aa).

Coiled-coil stretches lie at residues 316–341 (VNVG…RRHE) and 372–399 (QTLA…VEDQ). Disordered stretches follow at residues 424 to 458 (QARP…SFVD) and 483 to 615 (TSRE…AREA). Basic and acidic residues predominate over residues 438–447 (VDDKIEHEST). Composition is skewed to polar residues over residues 494 to 505 (PGQSQDLDNSQG) and 537 to 552 (TTDS…SDNE). The PTAP/PSAP motif motif lies at 603–606 (PSAP).

This sequence belongs to the filoviruses nucleoprotein family. As to quaternary structure, homooligomer. Homomultimerizes to form the nucleocapsid. Binds to viral genomic RNA. Interacts with VP35 and VP30 to form the nucleocapsid. Also interacts with VP24 and VP40. Phosphorylated.

It is found in the virion. It localises to the host cytoplasm. Functionally, encapsidates the genome, protecting it from nucleases. The encapsidated genomic RNA is termed the nucleocapsid and serves as template for transcription and replication. During replication, encapsidation by NP is coupled to RNA synthesis and all replicative products are resistant to nucleases. The polypeptide is Nucleoprotein (NP) (Lake Victoria marburgvirus (strain Ozolin-75) (MARV)).